Consider the following 302-residue polypeptide: uncharacterized protein (302 aa).

A disordered region spans residues methionine 1–proline 24.

This is an uncharacterized protein from Schizosaccharomyces pombe (strain 972 / ATCC 24843) (Fission yeast).